Reading from the N-terminus, the 448-residue chain is Homogentisate 1,2-dioxygenase (448 aa).

The active-site Proton acceptor is His-303. Positions 346 and 352 each coordinate Fe cation. Residues Tyr-361 and His-382 each contribute to the homogentisate site. His-382 is a binding site for Fe cation.

This sequence belongs to the homogentisate dioxygenase family. In terms of assembly, hexamer; dimer of trimers. Requires Fe cation as cofactor.

It catalyses the reaction homogentisate + O2 = 4-maleylacetoacetate + H(+). It participates in amino-acid degradation; L-phenylalanine degradation; acetoacetate and fumarate from L-phenylalanine: step 4/6. Involved in the catabolism of homogentisate (2,5-dihydroxyphenylacetate or 2,5-OH-PhAc), a central intermediate in the degradation of phenylalanine and tyrosine. Catalyzes the oxidative ring cleavage of the aromatic ring of homogentisate to yield maleylacetoacetate. This chain is Homogentisate 1,2-dioxygenase, found in Rhodopseudomonas palustris (strain BisB18).